A 380-amino-acid polypeptide reads, in one-letter code: Queuine tRNA-ribosyltransferase (380 aa).

The active-site Proton acceptor is aspartate 96. Substrate is bound by residues 96 to 100 (DSGGF), aspartate 150, glutamine 193, and glycine 220. The segment at 251–257 (GVGAPDS) is RNA binding. Aspartate 270 acts as the Nucleophile in catalysis. The segment at 275–279 (TRIAR) is RNA binding; important for wobble base 34 recognition. Zn(2+) is bound by residues cysteine 308, cysteine 310, cysteine 313, and histidine 339.

Belongs to the queuine tRNA-ribosyltransferase family. As to quaternary structure, homodimer. Within each dimer, one monomer is responsible for RNA recognition and catalysis, while the other monomer binds to the replacement base PreQ1. The cofactor is Zn(2+).

The enzyme catalyses 7-aminomethyl-7-carbaguanine + guanosine(34) in tRNA = 7-aminomethyl-7-carbaguanosine(34) in tRNA + guanine. Its pathway is tRNA modification; tRNA-queuosine biosynthesis. Catalyzes the base-exchange of a guanine (G) residue with the queuine precursor 7-aminomethyl-7-deazaguanine (PreQ1) at position 34 (anticodon wobble position) in tRNAs with GU(N) anticodons (tRNA-Asp, -Asn, -His and -Tyr). Catalysis occurs through a double-displacement mechanism. The nucleophile active site attacks the C1' of nucleotide 34 to detach the guanine base from the RNA, forming a covalent enzyme-RNA intermediate. The proton acceptor active site deprotonates the incoming PreQ1, allowing a nucleophilic attack on the C1' of the ribose to form the product. After dissociation, two additional enzymatic reactions on the tRNA convert PreQ1 to queuine (Q), resulting in the hypermodified nucleoside queuosine (7-(((4,5-cis-dihydroxy-2-cyclopenten-1-yl)amino)methyl)-7-deazaguanosine). This Streptococcus pneumoniae (strain P1031) protein is Queuine tRNA-ribosyltransferase.